The chain runs to 32 residues: uncharacterized protein (32 aa).

This is an uncharacterized protein from Treponema pallidum (strain Nichols).